Consider the following 345-residue polypeptide: NADPH dehydrogenase (345 aa).

Residue 23–26 coordinates FMN; it reads SPMC. Substrate is bound at residue Y28. Residues A60 and Q102 each coordinate FMN. 164 to 167 contacts substrate; the sequence is HGAH. FMN is bound by residues R215 and 307 to 308; that span reads GR.

The protein belongs to the NADH:flavin oxidoreductase/NADH oxidase family. NamA subfamily. As to quaternary structure, homotetramer. FMN serves as cofactor.

The enzyme catalyses A + NADPH + H(+) = AH2 + NADP(+). In terms of biological role, catalyzes the reduction of the double bond of an array of alpha,beta-unsaturated aldehydes and ketones. It also reduces the nitro group of nitroester and nitroaromatic compounds. It could have a role in detoxification processes. The sequence is that of NADPH dehydrogenase from Bacillus cereus (strain Q1).